A 633-amino-acid chain; its full sequence is 1-deoxy-D-xylulose-5-phosphate synthase (633 aa).

Residues histidine 72 and 113 to 115 contribute to the thiamine diphosphate site; that span reads GHS. Residue aspartate 144 coordinates Mg(2+). Thiamine diphosphate-binding positions include 145 to 146, asparagine 173, tyrosine 284, and glutamate 367; that span reads GA. Asparagine 173 provides a ligand contact to Mg(2+).

The protein belongs to the transketolase family. DXPS subfamily. As to quaternary structure, homodimer. Mg(2+) serves as cofactor. Thiamine diphosphate is required as a cofactor.

It carries out the reaction D-glyceraldehyde 3-phosphate + pyruvate + H(+) = 1-deoxy-D-xylulose 5-phosphate + CO2. The protein operates within metabolic intermediate biosynthesis; 1-deoxy-D-xylulose 5-phosphate biosynthesis; 1-deoxy-D-xylulose 5-phosphate from D-glyceraldehyde 3-phosphate and pyruvate: step 1/1. Its function is as follows. Catalyzes the acyloin condensation reaction between C atoms 2 and 3 of pyruvate and glyceraldehyde 3-phosphate to yield 1-deoxy-D-xylulose-5-phosphate (DXP). This chain is 1-deoxy-D-xylulose-5-phosphate synthase, found in Bacillus licheniformis (strain ATCC 14580 / DSM 13 / JCM 2505 / CCUG 7422 / NBRC 12200 / NCIMB 9375 / NCTC 10341 / NRRL NRS-1264 / Gibson 46).